A 205-amino-acid chain; its full sequence is Non-structural protein NS3 (205 aa).

The disordered stretch occupies residues 177-205 (GTRSPETGCRKVTSGLPHGASGGSGTRQG). The segment covering 196–205 (ASGGSGTRQG) has biased composition (gly residues).

It belongs to the orbivirus NS3 family.

Its function is as follows. May play a role in the release of virions from infected cells. This is Non-structural protein NS3 (Segment-10) from Broadhaven virus (BRD).